The following is a 185-amino-acid chain: Dihydrofolate reductase 1 (185 aa).

One can recognise a DHFR domain in the interval 8–185 (ELVLVVAADE…QASPRPLDDL (178 aa)).

Belongs to the dihydrofolate reductase family.

The enzyme catalyses (6S)-5,6,7,8-tetrahydrofolate + NADP(+) = 7,8-dihydrofolate + NADPH + H(+). It participates in cofactor biosynthesis; tetrahydrofolate biosynthesis; 5,6,7,8-tetrahydrofolate from 7,8-dihydrofolate: step 1/1. In terms of biological role, key enzyme in folate metabolism. Catalyzes an essential reaction for de novo glycine and purine synthesis, and for DNA precursor synthesis. The polypeptide is Dihydrofolate reductase 1 (folA1) (Haloarcula marismortui (strain ATCC 43049 / DSM 3752 / JCM 8966 / VKM B-1809) (Halobacterium marismortui)).